The sequence spans 332 residues: Glycerol-3-phosphate dehydrogenase [NAD(P)+] (332 aa).

Positions 11, 12, 32, 33, and 106 each coordinate NADPH. Lysine 106 and glycine 136 together coordinate sn-glycerol 3-phosphate. Position 140 (alanine 140) interacts with NADPH. Positions 191, 244, 254, 255, and 256 each coordinate sn-glycerol 3-phosphate. Lysine 191 acts as the Proton acceptor in catalysis. Arginine 255 provides a ligand contact to NADPH. The NADPH site is built by valine 280 and glutamate 282.

This sequence belongs to the NAD-dependent glycerol-3-phosphate dehydrogenase family.

The protein resides in the cytoplasm. The enzyme catalyses sn-glycerol 3-phosphate + NAD(+) = dihydroxyacetone phosphate + NADH + H(+). It carries out the reaction sn-glycerol 3-phosphate + NADP(+) = dihydroxyacetone phosphate + NADPH + H(+). The protein operates within membrane lipid metabolism; glycerophospholipid metabolism. In terms of biological role, catalyzes the reduction of the glycolytic intermediate dihydroxyacetone phosphate (DHAP) to sn-glycerol 3-phosphate (G3P), the key precursor for phospholipid synthesis. This is Glycerol-3-phosphate dehydrogenase [NAD(P)+] from Corynebacterium urealyticum (strain ATCC 43042 / DSM 7109).